Here is a 1331-residue protein sequence, read N- to C-terminus: Lysine-specific demethylase 3A-A (1331 aa).

Disordered stretches follow at residues 243–280 (LNDK…PSKD), 358–381 (TPPQ…TQNL), and 497–532 (KVVK…VTYP). The segment covering 266 to 280 (TELKQTRNEEVPSKD) has biased composition (basic and acidic residues). The segment at 683–708 (CDACDTTIFNLHWVCPKCGFGVCVDC) adopts a C6-type zinc-finger fold. Residues 894–898 (LRNLL) carry the LXXLL motif motif. The JmjC domain occupies 1086–1291 (RREGKLNLAA…HCFWLTQEFR (206 aa)). Fe cation contacts are provided by H1130, D1132, and H1259.

Belongs to the JHDM2 histone demethylase family. The cofactor is Fe(2+).

Its subcellular location is the cytoplasm. It is found in the nucleus. It catalyses the reaction N(6),N(6)-dimethyl-L-lysyl(9)-[histone H3] + 2 2-oxoglutarate + 2 O2 = L-lysyl(9)-[histone H3] + 2 formaldehyde + 2 succinate + 2 CO2. Its function is as follows. Histone demethylase that specifically demethylates 'Lys-9' of histone H3, thereby playing a central role in histone code. Preferentially demethylates mono- and dimethylated H3 'Lys-9' residue, with a preference for dimethylated residue, while it has weak or no activity on trimethylated H3 'Lys-9'. Demethylation of Lys residue generates formaldehyde and succinate. The protein is Lysine-specific demethylase 3A-A (kdm3a-a) of Xenopus laevis (African clawed frog).